The primary structure comprises 854 residues: Rod cGMP-specific 3',5'-cyclic phosphodiesterase subunit beta (854 aa).

At Ser2 the chain carries N-acetylserine. 2 GAF domains span residues 71-220 and 252-429; these read NMER…TLYL and DIER…GWSV. A PDEase domain is found at 481-814; sequence DEDELGEILK…KEWKALADEY (334 aa). The active-site Proton donor is His557. His561, His597, Asp598, and Asp718 together coordinate a divalent metal cation. Cys851 is lipidated: S-geranylgeranyl cysteine. Positions 852 to 854 are cleaved as a propeptide — removed in mature form; sequence CIL.

The protein belongs to the cyclic nucleotide phosphodiesterase family. In terms of assembly, oligomer composed of two catalytic chains (alpha and beta), an inhibitory chain (gamma) and the delta chain. A divalent metal cation is required as a cofactor.

It localises to the membrane. It is found in the cell projection. The protein resides in the cilium. The protein localises to the photoreceptor outer segment. It carries out the reaction 3',5'-cyclic GMP + H2O = GMP + H(+). Its function is as follows. Rod-specific cGMP phosphodiesterase that catalyzes the hydrolysis of 3',5'-cyclic GMP. Necessary for the formation of a functional phosphodiesterase holoenzyme. Involved in retinal circadian rhythm photoentrainment via modulation of UVA and orange light-induced phase-shift of the retina clock. May participate in processes of transmission and amplification of the visual signal. This chain is Rod cGMP-specific 3',5'-cyclic phosphodiesterase subunit beta, found in Homo sapiens (Human).